A 154-amino-acid chain; its full sequence is Superoxide dismutase [Cu-Zn] (154 aa).

Residues His47, His49, and His64 each coordinate Cu cation. A disulfide bridge connects residues Cys58 and Cys147. Zn(2+)-binding residues include His64, His72, His81, and Asp84. Residue His121 coordinates Cu cation. Residues 125 to 136 (DDLGKGGNEESL) show a composition bias toward basic and acidic residues. A disordered region spans residues 125–144 (DDLGKGGNEESLKTGNAGPR). Arg144 is a substrate binding site.

This sequence belongs to the Cu-Zn superoxide dismutase family. In terms of assembly, homodimer. Cu cation is required as a cofactor. The cofactor is Zn(2+).

Its subcellular location is the cytoplasm. The enzyme catalyses 2 superoxide + 2 H(+) = H2O2 + O2. Its function is as follows. Destroys radicals which are normally produced within the cells and which are toxic to biological systems. The polypeptide is Superoxide dismutase [Cu-Zn] (SOD1) (Candida glabrata (strain ATCC 2001 / BCRC 20586 / JCM 3761 / NBRC 0622 / NRRL Y-65 / CBS 138) (Yeast)).